The chain runs to 449 residues: Glucose-6-phosphate isomerase (449 aa).

Glu291 serves as the catalytic Proton donor. Residues His312 and Lys426 contribute to the active site.

This sequence belongs to the GPI family.

It localises to the cytoplasm. It catalyses the reaction alpha-D-glucose 6-phosphate = beta-D-fructose 6-phosphate. The protein operates within carbohydrate biosynthesis; gluconeogenesis. It functions in the pathway carbohydrate degradation; glycolysis; D-glyceraldehyde 3-phosphate and glycerone phosphate from D-glucose: step 2/4. Catalyzes the reversible isomerization of glucose-6-phosphate to fructose-6-phosphate. The protein is Glucose-6-phosphate isomerase of Streptococcus gordonii (strain Challis / ATCC 35105 / BCRC 15272 / CH1 / DL1 / V288).